The following is a 396-amino-acid chain: Probable sugar efflux transporter (396 aa).

Transmembrane regions (helical) follow at residues 15-35 (VVTL…PVGL), 50-70 (VGIM…PFML), 81-101 (LICL…SWSF), 103-123 (VLVI…SITA), 136-156 (AQAL…GLPL), 170-190 (FFAI…LLPL), 209-229 (PALM…YTAY), 246-266 (FATA…VIFG), 275-295 (ALVS…LPAA), 299-319 (IHLG…GLGM), 333-353 (VAMA…ALVG), and 364-384 (MIGY…IIIF).

Belongs to the major facilitator superfamily. SotB (TC 2.A.1.2) family.

The protein resides in the cell inner membrane. Its function is as follows. Involved in the efflux of sugars. The physiological role may be the reduction of the intracellular concentration of toxic sugars or sugar metabolites. The protein is Probable sugar efflux transporter of Shigella flexneri serotype 5b (strain 8401).